Consider the following 323-residue polypeptide: Annexin A3 (323 aa).

N-acetylalanine is present on alanine 2. Annexin repeat units follow at residues 18–89 (FSPS…ALVT), 90–161 (PPAV…TLAD), 173–245 (HLAK…AIVN), and 249–320 (NTPA…KICG). Threonine 267 bears the Phosphothreonine mark.

The protein belongs to the annexin family.

Inhibitor of phospholipase A2, also possesses anti-coagulant properties. Also cleaves the cyclic bond of inositol 1,2-cyclic phosphate to form inositol 1-phosphate. The protein is Annexin A3 (ANXA3) of Homo sapiens (Human).